The chain runs to 153 residues: Superoxide dismutase [Cu-Zn] (153 aa).

Residues His45, His47, and His62 each contribute to the Cu cation site. A disulfide bond links Cys56 and Cys145. The Zn(2+) site is built by His62, His70, His79, and Asp82. His119 provides a ligand contact to Cu cation.

The protein belongs to the Cu-Zn superoxide dismutase family. In terms of assembly, homodimer. Cu cation serves as cofactor. Zn(2+) is required as a cofactor.

It localises to the cytoplasm. The catalysed reaction is 2 superoxide + 2 H(+) = H2O2 + O2. In terms of biological role, destroys radicals which are normally produced within the cells and which are toxic to biological systems. This chain is Superoxide dismutase [Cu-Zn], found in Drosophila teissieri (Fruit fly).